A 97-amino-acid chain; its full sequence is MQKSEGFRSKTRYKLQKHPRQKGMAPLTRALKCYTEGDLVHVVLDPSVQKGMPHPKFHGKTGVVVAQRGSSFLVRVKDGGKYKDIIARPQHLRESKL.

The tract at residues 1–24 is disordered; the sequence is MQKSEGFRSKTRYKLQKHPRQKGM. Over residues 9 to 21 the composition is skewed to basic residues; sequence SKTRYKLQKHPRQ.

It belongs to the eukaryotic ribosomal protein eL21 family.

This chain is Large ribosomal subunit protein eL21, found in Methanococcus maripaludis (strain DSM 14266 / JCM 13030 / NBRC 101832 / S2 / LL).